The following is a 237-amino-acid chain: UPF0053 inner membrane protein YgdQ (237 aa).

The Periplasmic portion of the chain corresponds to Met1–Thr17. A helical membrane pass occupies residues Leu18–Ala38. The Cytoplasmic segment spans residues Lys39 to Arg50. Residues Leu51–Thr71 traverse the membrane as a helical segment. Residues Arg72–Thr79 are Periplasmic-facing. Residues Ile80–Ile100 form a helical membrane-spanning segment. Residues Trp101–Ser124 lie on the Cytoplasmic side of the membrane. Residues Phe125–Ile145 form a helical membrane-spanning segment. At Thr146–Ser151 the chain is on the periplasmic side. The chain crosses the membrane as a helical span at residues Asp152–Ala172. Residues Arg173–Lys186 lie on the Cytoplasmic side of the membrane. The chain crosses the membrane as a helical span at residues Met187–Ile207. Over His208–Val209 the chain is Periplasmic. The chain crosses the membrane as a helical span at residues Pro210 to Ile230. Residues Arg231–Leu237 are Cytoplasmic-facing.

Belongs to the UPF0053 family.

It localises to the cell inner membrane. This chain is UPF0053 inner membrane protein YgdQ (ygdQ), found in Escherichia coli O157:H7.